A 554-amino-acid chain; its full sequence is Urocanate hydratase (554 aa).

Residues 51-52, Gln-129, 175-177, Glu-195, 241-242, 262-266, 272-273, and Tyr-321 contribute to the NAD(+) site; these read GG, GMG, NA, QTSAH, and YL. The active site involves Cys-409. Gly-491 is a binding site for NAD(+).

It belongs to the urocanase family. NAD(+) serves as cofactor.

The protein localises to the cytoplasm. The catalysed reaction is 4-imidazolone-5-propanoate = trans-urocanate + H2O. It functions in the pathway amino-acid degradation; L-histidine degradation into L-glutamate; N-formimidoyl-L-glutamate from L-histidine: step 2/3. Catalyzes the conversion of urocanate to 4-imidazolone-5-propionate. In Methylobacterium nodulans (strain LMG 21967 / CNCM I-2342 / ORS 2060), this protein is Urocanate hydratase.